Consider the following 102-residue polypeptide: Probable non-specific lipid-transfer protein (102 aa).

An N-terminal signal peptide occupies residues 1–35 (MAMAMGMAMRKEAAVAVMMVMVVTLAAGADAGAGA). 4 disulfide bridges follow: Cys-37–Cys-71, Cys-45–Cys-59, Cys-60–Cys-95, and Cys-69–Cys-102.

The protein belongs to the plant LTP family. B11E subfamily. In terms of tissue distribution, aleurone.

Functionally, potential phospholipid transfer protein. The polypeptide is Probable non-specific lipid-transfer protein (LTP2) (Hordeum vulgare (Barley)).